A 180-amino-acid chain; its full sequence is Pro-glucagon (180 aa).

The signal sequence occupies residues 1-20 (MKTIYFVAGLFVMLVQGSWQ). Positions 25–59 (NTEEKSRSFPAPQTDPLDDPDQMTEDKRHSQGTFT) are disordered. At S54 the chain carries Phosphoserine. A propeptide spanning residues 84–89 (NKNNIA) is cleaved from the precursor. Phosphoserine occurs at positions 105 and 108. R127 bears the Arginine amide mark. The propeptide occupies 131–145 (DFPEEVTIVEELRRR). S150 and S152 each carry phosphoserine.

This sequence belongs to the glucagon family. Proglucagon is post-translationally processed in a tissue-specific manner in pancreatic A cells and intestinal L cells. In pancreatic A cells, the major bioactive hormone is glucagon cleaved by PCSK2/PC2. In the intestinal L cells PCSK1/PC1 liberates GLP-1, GLP-2, glicentin and oxyntomodulin. GLP-1 is further N-terminally truncated by post-translational processing in the intestinal L cells resulting in GLP-1(7-37) GLP-1-(7-36)amide. The C-terminal amidation is neither important for the metabolism of GLP-1 nor for its effects on the endocrine pancreas. In terms of tissue distribution, glucagon is secreted in the A cells of the islets of Langerhans. GLP-1, GLP-2, oxyntomodulin and glicentin are secreted from enteroendocrine cells throughout the gastrointestinal tract. GLP-1 and GLP-2 are also secreted in selected neurons in the brain.

It localises to the secreted. Plays a key role in glucose metabolism and homeostasis. Regulates blood glucose by increasing gluconeogenesis and decreasing glycolysis. A counterregulatory hormone of insulin, raises plasma glucose levels in response to insulin-induced hypoglycemia. Plays an important role in initiating and maintaining hyperglycemic conditions in diabetes. Its function is as follows. Potent stimulator of glucose-dependent insulin release. Also stimulates insulin release in response to IL6. Plays important roles on gastric motility and the suppression of plasma glucagon levels. May be involved in the suppression of satiety and stimulation of glucose disposal in peripheral tissues, independent of the actions of insulin. Has growth-promoting activities on intestinal epithelium. May also regulate the hypothalamic pituitary axis (HPA) via effects on LH, TSH, CRH, oxytocin, and vasopressin secretion. Increases islet mass through stimulation of islet neogenesis and pancreatic beta cell proliferation. Inhibits beta cell apoptosis. In terms of biological role, stimulates intestinal growth and up-regulates villus height in the small intestine, concomitant with increased crypt cell proliferation and decreased enterocyte apoptosis. The gastrointestinal tract, from the stomach to the colon is the principal target for GLP-2 action. Plays a key role in nutrient homeostasis, enhancing nutrient assimilation through enhanced gastrointestinal function, as well as increasing nutrient disposal. Stimulates intestinal glucose transport and decreases mucosal permeability. Functionally, significantly reduces food intake. Inhibits gastric emptying in humans. Suppression of gastric emptying may lead to increased gastric distension, which may contribute to satiety by causing a sensation of fullness. May modulate gastric acid secretion and the gastro-pyloro-duodenal activity. May play an important role in intestinal mucosal growth in the early period of life. The protein is Pro-glucagon (GCG) of Sus scrofa (Pig).